Reading from the N-terminus, the 253-residue chain is Negative modulator of initiation of replication (253 aa).

A disordered region spans residues 66–112; the sequence is SNQEQQTGHGHAGEPSAVQTPESNDYAKAQPHSSGYQPGQLEGHKSE. The interval 154–155 is interaction with DNA; that stretch reads AV.

It belongs to the SeqA family. In terms of assembly, homodimer. Polymerizes to form helical filaments.

It localises to the cytoplasm. Negative regulator of replication initiation, which contributes to regulation of DNA replication and ensures that replication initiation occurs exactly once per chromosome per cell cycle. Binds to pairs of hemimethylated GATC sequences in the oriC region, thus preventing assembly of replication proteins and re-initiation at newly replicated origins. Repression is relieved when the region becomes fully methylated. This is Negative modulator of initiation of replication from Shewanella denitrificans (strain OS217 / ATCC BAA-1090 / DSM 15013).